The following is a 73-amino-acid chain: Translation initiation factor IF-1 (73 aa).

An S1-like domain is found at 1–73 (MAKKDGVIEI…TRGRIVYRYK (73 aa)).

This sequence belongs to the IF-1 family. As to quaternary structure, component of the 30S ribosomal translation pre-initiation complex which assembles on the 30S ribosome in the order IF-2 and IF-3, IF-1 and N-formylmethionyl-tRNA(fMet); mRNA recruitment can occur at any time during PIC assembly.

It localises to the cytoplasm. Functionally, one of the essential components for the initiation of protein synthesis. Stabilizes the binding of IF-2 and IF-3 on the 30S subunit to which N-formylmethionyl-tRNA(fMet) subsequently binds. Helps modulate mRNA selection, yielding the 30S pre-initiation complex (PIC). Upon addition of the 50S ribosomal subunit IF-1, IF-2 and IF-3 are released leaving the mature 70S translation initiation complex. The polypeptide is Translation initiation factor IF-1 (Paenarthrobacter aurescens (strain TC1)).